Here is a 371-residue protein sequence, read N- to C-terminus: Protein IQ-DOMAIN 7 (371 aa).

Positions 1-32 are disordered; the sequence is MGGSGNWIRSLISNRKPVNDQQEKLSDKSSKK. The span at 17–29 shows a compositional bias: basic and acidic residues; it reads PVNDQQEKLSDKS. 2 IQ domains span residues 93-121 and 122-144; these read REWASTRIQAAFRAFLARQAFRALKAVVR and IQAIFRGRQVRKQAAVTLRCMQA. The interval 125-141 is calmodulin-binding; the sequence is IFRGRQVRKQAAVTLRC. Disordered stretches follow at residues 285-308 and 327-371; these read SGMSYDSLHDETSTSSTSQSPVAF and LTQS…SQRS. Polar residues-rich tracts occupy residues 297–308 and 327–341; these read STSSTSQSPVAF and LTQSTQAKQRQSGLS.

The protein belongs to the IQD family. Binds to multiple calmodulin (CaM) in the presence of Ca(2+) and CaM-like proteins.

It localises to the nucleus. Its subcellular location is the nucleus envelope. The protein localises to the cytoplasm. It is found in the cytoskeleton. May be involved in cooperative interactions with calmodulins or calmodulin-like proteins. Recruits calmodulin proteins to microtubules, thus being a potential scaffold in cellular signaling and trafficking. May associate with nucleic acids and regulate gene expression at the transcriptional or post-transcriptional level. The protein is Protein IQ-DOMAIN 7 of Arabidopsis thaliana (Mouse-ear cress).